The primary structure comprises 166 residues: Bile acid 7alpha-dehydratase (166 aa).

Homodimer.

The catalysed reaction is 7alpha,12alpha-dihydroxy-3-oxochol-4-en-24-oyl-CoA = 12alpha-hydroxy-3-oxochola-4,6-dien-24-oyl-CoA + H2O. The enzyme catalyses 7alpha-hydroxy-3-oxochol-4-en-24-oyl-CoA = 3-oxochol-4,6-dien-24-oyl-CoA + H2O. It catalyses the reaction 7alpha,12alpha-dihydroxy-3-oxochol-4-en-24-oate = 12alpha-hydroxy-3-oxochola-4,6-dien-24-oate + H2O. It carries out the reaction 7alpha-hydroxy-3-oxochol-4-en-24-oate = 3-oxochola-4,6-dien-24-oate + H2O. It functions in the pathway lipid metabolism; bile acid biosynthesis. Functionally, functions in the bile acid 7alpha-dehydroxylation pathway, which forms secondary bile acids via the 7alpha-dehydroxylation of primary bile acids, and is carried out by intestinal anaerobic bacteria. Catalyzes the dehydration step in this pathway, yielding a 3-oxo-Delta(4,6)-bile acid-CoA intermediate. In vitro, can act on the free bile acids (non CoA-conjugated) 7-alpha,12-alpha-dihydroxy-3-oxochol-4-enoate and 7-alpha-hydroxy-3-oxochol-4-enoate, but not on 7-alpha,12-alpha-dihydroxy-3-oxo-5-beta-cholanate, 3-alpha,7-alpha,12-alpha-trihydroxy-5-beta-cholanate or 7-beta-hydroxy-3-oxochol-4-enoate. This chain is Bile acid 7alpha-dehydratase, found in Clostridium scindens (strain JCM 10418 / VPI 12708).